Consider the following 652-residue polypeptide: ATP-dependent zinc metalloprotease FtsH 2 (652 aa).

Over 1-6 (MNKYRR) the chain is Cytoplasmic. Residues 7–27 (GLALGALALAVFILIGVGISM) traverse the membrane as a helical segment. Residues 28 to 108 (RATPQPVNLT…PAGNGAISAD (81 aa)) lie on the Extracellular side of the membrane. The helical transmembrane segment at 109-129 (LMLLLRILTIVAVGVVIFVLF) threads the bilayer. Residues 130–652 (RRFGPSSIGT…RAAKPQIDRT (523 aa)) are Cytoplasmic-facing. Position 200 to 207 (200 to 207 (GPPGTGKT)) interacts with ATP. Residue histidine 420 coordinates Zn(2+). Glutamate 421 is a catalytic residue. Residues histidine 424 and aspartate 496 each coordinate Zn(2+).

The protein in the central section; belongs to the AAA ATPase family. In the C-terminal section; belongs to the peptidase M41 family. Homohexamer. It depends on Zn(2+) as a cofactor.

Its subcellular location is the cell membrane. In terms of biological role, acts as a processive, ATP-dependent zinc metallopeptidase for both cytoplasmic and membrane proteins. Plays a role in the quality control of integral membrane proteins. The protein is ATP-dependent zinc metalloprotease FtsH 2 of Sphaerobacter thermophilus (strain ATCC 49802 / DSM 20745 / KCCM 41009 / NCIMB 13125 / S 6022).